The sequence spans 276 residues: Transmembrane protein 45B (276 aa).

Transmembrane regions (helical) follow at residues 7 to 27 (HALP…KYPL), 48 to 68 (IIEA…EQFV), 95 to 115 (LFFA…HVPL), 147 to 167 (IHSL…VEVV), 181 to 201 (LLLL…PPFG), and 213 to 233 (IMFV…ILAA). 2 positions are modified to phosphoserine: serine 271 and serine 273.

The protein belongs to the TMEM45 family.

Its subcellular location is the endosome membrane. It localises to the lysosome membrane. It is found in the golgi apparatus. The protein localises to the trans-Golgi network membrane. Functionally, plays a role in innate immunity. The chain is Transmembrane protein 45B (TMEM45B) from Bos taurus (Bovine).